The primary structure comprises 974 residues: Bifunctional glutamine synthetase adenylyltransferase/adenylyl-removing enzyme (974 aa).

The adenylyl removase stretch occupies residues 1–464 (MKNAFLKTQL…HYAALFENEQ (464 aa)). The interval 468 to 974 (LEIGNLVFTG…YSIFKQVMKY (507 aa)) is adenylyl transferase.

The protein belongs to the GlnE family. The cofactor is Mg(2+).

It carries out the reaction [glutamine synthetase]-O(4)-(5'-adenylyl)-L-tyrosine + phosphate = [glutamine synthetase]-L-tyrosine + ADP. It catalyses the reaction [glutamine synthetase]-L-tyrosine + ATP = [glutamine synthetase]-O(4)-(5'-adenylyl)-L-tyrosine + diphosphate. Involved in the regulation of glutamine synthetase GlnA, a key enzyme in the process to assimilate ammonia. When cellular nitrogen levels are high, the C-terminal adenylyl transferase (AT) inactivates GlnA by covalent transfer of an adenylyl group from ATP to specific tyrosine residue of GlnA, thus reducing its activity. Conversely, when nitrogen levels are low, the N-terminal adenylyl removase (AR) activates GlnA by removing the adenylyl group by phosphorolysis, increasing its activity. The regulatory region of GlnE binds the signal transduction protein PII (GlnB) which indicates the nitrogen status of the cell. This chain is Bifunctional glutamine synthetase adenylyltransferase/adenylyl-removing enzyme, found in Bartonella henselae (strain ATCC 49882 / DSM 28221 / CCUG 30454 / Houston 1) (Rochalimaea henselae).